The primary structure comprises 720 residues: Phosphoribosylformylglycinamidine synthase subunit PurL (720 aa).

Histidine 47 is a catalytic residue. Residues tyrosine 50 and lysine 89 each coordinate ATP. Glutamate 91 contacts Mg(2+). Substrate contacts are provided by residues 92-95 (SHNH) and arginine 114. Histidine 93 (proton acceptor) is an active-site residue. Aspartate 115 contributes to the Mg(2+) binding site. Glutamine 238 contacts substrate. A Mg(2+)-binding site is contributed by aspartate 266. 310-312 (ESQ) contributes to the substrate binding site. 2 residues coordinate ATP: aspartate 488 and glycine 525. Asparagine 526 contacts Mg(2+). Serine 528 contributes to the substrate binding site.

Belongs to the FGAMS family. Monomer. Part of the FGAM synthase complex composed of 1 PurL, 1 PurQ and 2 PurS subunits.

Its subcellular location is the cytoplasm. It carries out the reaction N(2)-formyl-N(1)-(5-phospho-beta-D-ribosyl)glycinamide + L-glutamine + ATP + H2O = 2-formamido-N(1)-(5-O-phospho-beta-D-ribosyl)acetamidine + L-glutamate + ADP + phosphate + H(+). It participates in purine metabolism; IMP biosynthesis via de novo pathway; 5-amino-1-(5-phospho-D-ribosyl)imidazole from N(2)-formyl-N(1)-(5-phospho-D-ribosyl)glycinamide: step 1/2. Its function is as follows. Part of the phosphoribosylformylglycinamidine synthase complex involved in the purines biosynthetic pathway. Catalyzes the ATP-dependent conversion of formylglycinamide ribonucleotide (FGAR) and glutamine to yield formylglycinamidine ribonucleotide (FGAM) and glutamate. The FGAM synthase complex is composed of three subunits. PurQ produces an ammonia molecule by converting glutamine to glutamate. PurL transfers the ammonia molecule to FGAR to form FGAM in an ATP-dependent manner. PurS interacts with PurQ and PurL and is thought to assist in the transfer of the ammonia molecule from PurQ to PurL. The sequence is that of Phosphoribosylformylglycinamidine synthase subunit PurL from Cereibacter sphaeroides (strain ATCC 17023 / DSM 158 / JCM 6121 / CCUG 31486 / LMG 2827 / NBRC 12203 / NCIMB 8253 / ATH 2.4.1.) (Rhodobacter sphaeroides).